We begin with the raw amino-acid sequence, 212 residues long: Interleukin-6 (212 aa).

The first 27 residues, 1 to 27, serve as a signal peptide directing secretion; sequence MNSFSTSAFGPVAFSLGLLLVLPAAFP. A disulfide bond links C72 and C78. N73 is a glycosylation site (N-linked (GlcNAc...) asparagine). A Phosphoserine modification is found at S81. The cysteines at positions 101 and 111 are disulfide-linked. A glycan (N-linked (GlcNAc...) asparagine) is linked at N172.

Belongs to the IL-6 superfamily. Component of a hexamer of two molecules each of IL6, IL6R and IL6ST; first binds to IL6R to associate with the signaling subunit IL6ST. Interacts with IL6R (via the N-terminal ectodomain); this interaction may be affected by IL6R-binding with SORL1, hence decreasing IL6 cis signaling. Interacts with SORL1 (via the N-terminal ectodomain); this interaction leads to IL6 internalization and lysosomal degradation. May form a trimeric complex with the soluble SORL1 ectodomain and soluble IL6R receptor; this interaction might stabilize circulating IL6, hence promoting IL6 trans signaling.

Its subcellular location is the secreted. Its function is as follows. Cytokine with a wide variety of biological functions in immunity, tissue regeneration, and metabolism. Binds to IL6R, then the complex associates to the signaling subunit IL6ST/gp130 to trigger the intracellular IL6-signaling pathway. The interaction with the membrane-bound IL6R and IL6ST stimulates 'classic signaling', whereas the binding of IL6 and soluble IL6R to IL6ST stimulates 'trans-signaling'. Alternatively, 'cluster signaling' occurs when membrane-bound IL6:IL6R complexes on transmitter cells activate IL6ST receptors on neighboring receiver cells. IL6 is a potent inducer of the acute phase response. Rapid production of IL6 contributes to host defense during infection and tissue injury, but excessive IL6 synthesis is involved in disease pathology. In the innate immune response, is synthesized by myeloid cells, such as macrophages and dendritic cells, upon recognition of pathogens through toll-like receptors (TLRs) at the site of infection or tissue injury. In the adaptive immune response, is required for the differentiation of B cells into immunoglobulin-secreting cells. Plays a major role in the differentiation of CD4(+) T cell subsets. Essential factor for the development of T follicular helper (Tfh) cells that are required for the induction of germinal-center formation. Required to drive naive CD4(+) T cells to the Th17 lineage. Also required for proliferation of myeloma cells and the survival of plasmablast cells. Functionally, acts as an essential factor in bone homeostasis and on vessels directly or indirectly by induction of VEGF, resulting in increased angiogenesis activity and vascular permeability. Induces, through 'trans-signaling' and synergistically with IL1B and TNF, the production of VEGF. Involved in metabolic controls, is discharged into the bloodstream after muscle contraction increasing lipolysis and improving insulin resistance. 'Trans-signaling' in central nervous system also regulates energy and glucose homeostasis. Mediates, through GLP-1, crosstalk between insulin-sensitive tissues, intestinal L cells and pancreatic islets to adapt to changes in insulin demand. Also acts as a myokine. Plays a protective role during liver injury, being required for maintenance of tissue regeneration. Also has a pivotal role in iron metabolism by regulating HAMP/hepcidin expression upon inflammation or bacterial infection. Through activation of IL6ST-YAP-NOTCH pathway, induces inflammation-induced epithelial regeneration. This Macaca mulatta (Rhesus macaque) protein is Interleukin-6 (IL6).